The primary structure comprises 339 residues: Uroporphyrinogen decarboxylase (339 aa).

Residues 21–25 (RQAGR), aspartate 71, tyrosine 147, serine 202, and histidine 315 each bind substrate.

Belongs to the uroporphyrinogen decarboxylase family. In terms of assembly, homodimer.

The protein resides in the cytoplasm. It carries out the reaction uroporphyrinogen III + 4 H(+) = coproporphyrinogen III + 4 CO2. The protein operates within porphyrin-containing compound metabolism; protoporphyrin-IX biosynthesis; coproporphyrinogen-III from 5-aminolevulinate: step 4/4. In terms of biological role, catalyzes the decarboxylation of four acetate groups of uroporphyrinogen-III to yield coproporphyrinogen-III. This is Uroporphyrinogen decarboxylase from Helicobacter pylori (strain HPAG1).